A 410-amino-acid polypeptide reads, in one-letter code: MKIMSVNSGSSSLKFQLLEMPQQEVIVSGLVERIGSNQAVFTMKTKDKKDKQVLEVLNHQTAVELLLDALIQKKVINTLEEIEGVGHRVVQGGEIFSDSAVLTEKTLAQIESLCDLAPLHNPANIISIKAFQKVLPQVFQVAVFDTTFHQSMPAVNFLYAAPYYWYQKYQIRKYGAHGTSYKYITEQMQQILGKKNAKIIICHAGNGVSLCAVDSGKSVDTSMGFTPLEGVPMGTRSGNIDPAVVKFIAEKENKTVACVIDDLNKKSGYLGVSGISNDTRDILANIKEGNQQAILSHDIQVKRIVDYIASYYVLLKGVDALVFTAGIGENSSFFRSEIIKRLSVLGIKLDEEKNKVQGKQELITTFDSAIKAFVVPTNEELAIAQDVLRLQQNQTNQDKDDQQECFCCCG.

N7 lines the Mg(2+) pocket. Residue K14 coordinates ATP. Substrate is bound at residue R88. D145 (proton donor/acceptor) is an active-site residue. Residues 203 to 207 (HAGNG), 278 to 280 (DTR), and 326 to 330 (GIGEN) each bind ATP. E379 contributes to the Mg(2+) binding site.

This sequence belongs to the acetokinase family. Homodimer. The cofactor is Mg(2+). Mn(2+) is required as a cofactor.

The protein localises to the cytoplasm. The enzyme catalyses acetate + ATP = acetyl phosphate + ADP. Its pathway is metabolic intermediate biosynthesis; acetyl-CoA biosynthesis; acetyl-CoA from acetate: step 1/2. Functionally, catalyzes the formation of acetyl phosphate from acetate and ATP. Can also catalyze the reverse reaction. The sequence is that of Acetate kinase from Onion yellows phytoplasma (strain OY-M).